The chain runs to 147 residues: Putative protein CLUHP3 (147 aa).

The disordered stretch occupies residues 14–47 (KEPEGGRRRLSHPGNMGWMRPSQETTPPDRSHHS).

In Homo sapiens (Human), this protein is Putative protein CLUHP3 (CLUHP3).